A 344-amino-acid polypeptide reads, in one-letter code: Ig alpha chain C region (344 aa).

The region spanning 6–99 is the Ig-like 1 domain; the sequence is PTIYPLTLPP…SNPVQELDVN (94 aa). 2 disulfide bridges follow: Cys26/Cys84 and Cys76/Cys100. Residues Asn38 and Asn99 are each glycosylated (N-linked (GlcNAc...) asparagine). O-linked (GalNAc) serine; in variant MOPC 47A glycosylation occurs at Ser101. Cystine bridges form between Cys114–Cys171 and Cys138–Cys195. Ig-like domains are found at residues 116 to 206 and 219 to 321; these read PSLS…GTLT and PQVH…KTID. N-linked (GlcNAc...) asparagine glycosylation is present at Asn329. Ser331 carries N-linked (GlcNAc...) asparagine; in variant M511 glycosylation.

Ig alpha is the major immunoglobulin class in body secretions. It may serve both to defend against local infection and to prevent access of foreign antigens to the general immunologic system. This chain is Ig alpha chain C region, found in Mus musculus (Mouse).